The following is a 455-amino-acid chain: Protein YmfN (455 aa).

It belongs to the phage terminase family.

In Escherichia coli (strain K12), this protein is Protein YmfN (ymfN).